The chain runs to 40 residues: Natriuretic peptide PaNP-b (40 aa).

A disulfide bridge connects residues Cys9 and Cys25. A propeptide spanning residues 36–40 is cleaved from the precursor; it reads IPGGS.

This sequence belongs to the natriuretic peptide family. In terms of tissue distribution, expressed by the venom gland.

The protein resides in the secreted. Its function is as follows. Snake venom natriuretic peptide that targets both NPR1 and NPR2. Exhibits hypotensive and vasodepressor activities. In Pseudechis australis (Mulga snake), this protein is Natriuretic peptide PaNP-b.